The sequence spans 120 residues: NAD(P)H-quinone oxidoreductase subunit 3, chloroplastic (120 aa).

3 helical membrane-spanning segments follow: residues 7-27 (YETFWIFLLISSLMPILAFLI), 64-84 (MFALVFVVFDVETVFLYPWAM), and 88-108 (ILGISTFIEASIFVLILIVGS).

The protein belongs to the complex I subunit 3 family. In terms of assembly, NDH is composed of at least 16 different subunits, 5 of which are encoded in the nucleus.

The protein resides in the plastid. The protein localises to the chloroplast thylakoid membrane. It carries out the reaction a plastoquinone + NADH + (n+1) H(+)(in) = a plastoquinol + NAD(+) + n H(+)(out). The enzyme catalyses a plastoquinone + NADPH + (n+1) H(+)(in) = a plastoquinol + NADP(+) + n H(+)(out). Functionally, NDH shuttles electrons from NAD(P)H:plastoquinone, via FMN and iron-sulfur (Fe-S) centers, to quinones in the photosynthetic chain and possibly in a chloroplast respiratory chain. The immediate electron acceptor for the enzyme in this species is believed to be plastoquinone. Couples the redox reaction to proton translocation, and thus conserves the redox energy in a proton gradient. The protein is NAD(P)H-quinone oxidoreductase subunit 3, chloroplastic of Cycas taitungensis (Prince sago).